A 940-amino-acid polypeptide reads, in one-letter code: Isoleucine--tRNA ligase (940 aa).

The 'HIGH' region signature appears at 58–68 (PYANGSIHIGH). Position 564 (E564) interacts with L-isoleucyl-5'-AMP. A 'KMSKS' region motif is present at residues 605 to 609 (KMSKS). K608 is a binding site for ATP. 4 residues coordinate Zn(2+): C903, C906, C923, and C926.

It belongs to the class-I aminoacyl-tRNA synthetase family. IleS type 1 subfamily. In terms of assembly, monomer. Zn(2+) is required as a cofactor.

The protein resides in the cytoplasm. It carries out the reaction tRNA(Ile) + L-isoleucine + ATP = L-isoleucyl-tRNA(Ile) + AMP + diphosphate. Its function is as follows. Catalyzes the attachment of isoleucine to tRNA(Ile). As IleRS can inadvertently accommodate and process structurally similar amino acids such as valine, to avoid such errors it has two additional distinct tRNA(Ile)-dependent editing activities. One activity is designated as 'pretransfer' editing and involves the hydrolysis of activated Val-AMP. The other activity is designated 'posttransfer' editing and involves deacylation of mischarged Val-tRNA(Ile). The sequence is that of Isoleucine--tRNA ligase from Shewanella oneidensis (strain ATCC 700550 / JCM 31522 / CIP 106686 / LMG 19005 / NCIMB 14063 / MR-1).